Consider the following 414-residue polypeptide: Snake venom metalloproteinase atrolysin-B (414 aa).

The N-terminal stretch at Met-1–Ser-20 is a signal peptide. Positions Ile-21–Asp-190 are excised as a propeptide. Pyrrolidone carboxylic acid is present on Gln-191. The Peptidase M12B domain maps to Arg-197–Pro-393. Positions 200 and 284 each coordinate Ca(2+). Cystine bridges form between Cys-308-Cys-388 and Cys-348-Cys-355. Position 333 (His-333) interacts with Zn(2+). Glu-334 is an active-site residue. Zn(2+) is bound by residues His-337 and His-343. Positions 388, 391, 403, 406, 408, 410, and 413 each coordinate Ca(2+). Residues Leu-394–Glu-414 constitute a propeptide that is removed on maturation.

It belongs to the venom metalloproteinase (M12B) family. P-I subfamily. Monomer. The cofactor is Zn(2+). The N-terminus is blocked. In terms of tissue distribution, expressed by the venom gland.

Its subcellular location is the secreted. It catalyses the reaction Cleavage of 5-His-|-Leu-6, 10-His-|-Leu-11, 14-Ala-|-Leu-15, 16-Tyr-|-Leu-17 and 23-Gly-|-Phe-24 of insulin B chain. Identical to the cleavage of insulin B chain by atrolysin C. Also cleaves Xaa-|-Ser bonds in glucagon.. Its function is as follows. Snake venom metalloproteinase that impairs hemostasis in the envenomed animal. The polypeptide is Snake venom metalloproteinase atrolysin-B (Crotalus atrox (Western diamondback rattlesnake)).